Reading from the N-terminus, the 83-residue chain is Kunitz-type serine protease inhibitor microlepidin-1 (83 aa).

An N-terminal signal peptide occupies residues 1 to 24; the sequence is MSSGGLLLLLGLLTLWEVLTPVSS. The BPTI/Kunitz inhibitor domain occupies 31–81; it reads CELPADTGPCRVGFPSFYYNPDEKKCLEFIYGGCEGNANNFITKEECESTC. 3 disulfides stabilise this stretch: C31–C81, C40–C64, and C56–C77.

It belongs to the venom Kunitz-type family. In terms of tissue distribution, expressed by the venom gland.

The protein resides in the secreted. In terms of biological role, serine protease inhibitor. This Oxyuranus microlepidotus (Inland taipan) protein is Kunitz-type serine protease inhibitor microlepidin-1.